Here is a 476-residue protein sequence, read N- to C-terminus: Glucan endo-1,3-beta-glucosidase 9 (476 aa).

The signal sequence occupies residues Met1 to Ala25. N-linked (GlcNAc...) asparagine glycosylation is found at Asn88 and Asn101. Catalysis depends on Glu122, which acts as the Proton donor. Asn184, Asn216, Asn277, Asn320, Asn342, Asn374, and Asn405 each carry an N-linked (GlcNAc...) asparagine glycan. An intrachain disulfide couples Cys364 to Cys424. A lipid anchor (GPI-anchor amidated serine) is attached at Ser453. A propeptide spans Ser454 to Phe476 (removed in mature form).

The protein belongs to the glycosyl hydrolase 17 family. In terms of processing, contains two additional disulfide bonds.

Its subcellular location is the secreted. It localises to the cell wall. The protein resides in the cell membrane. It catalyses the reaction Hydrolysis of (1-&gt;3)-beta-D-glucosidic linkages in (1-&gt;3)-beta-D-glucans.. This Arabidopsis thaliana (Mouse-ear cress) protein is Glucan endo-1,3-beta-glucosidase 9.